Here is a 365-residue protein sequence, read N- to C-terminus: Ribosomal RNA large subunit methyltransferase F (365 aa).

Residues 1 to 50 (MSKPAVKSVPSATAKTATRAANPRQKAKAPKQAKPEGKGRAKPSKDKPRA) form a disordered region. Residues 33 to 50 (AKPEGKGRAKPSKDKPRA) show a composition bias toward basic and acidic residues.

It belongs to the methyltransferase superfamily. METTL16/RlmF family.

It is found in the cytoplasm. It catalyses the reaction adenosine(1618) in 23S rRNA + S-adenosyl-L-methionine = N(6)-methyladenosine(1618) in 23S rRNA + S-adenosyl-L-homocysteine + H(+). Specifically methylates the adenine in position 1618 of 23S rRNA. This is Ribosomal RNA large subunit methyltransferase F from Shewanella baltica (strain OS195).